A 674-amino-acid polypeptide reads, in one-letter code: DNA ligase (674 aa).

Residues 34–38 (DSEYD), 83–84 (SL), and Glu114 contribute to the NAD(+) site. Lys116 (N6-AMP-lysine intermediate) is an active-site residue. NAD(+) is bound by residues Arg137, Glu174, Lys290, and Lys314. The Zn(2+) site is built by Cys405, Cys408, Cys424, and Cys429. A BRCT domain is found at 587–674 (QSGTQFDGKM…KLSLIENTKF (88 aa)).

This sequence belongs to the NAD-dependent DNA ligase family. LigA subfamily. Requires Mg(2+) as cofactor. Mn(2+) is required as a cofactor.

The catalysed reaction is NAD(+) + (deoxyribonucleotide)n-3'-hydroxyl + 5'-phospho-(deoxyribonucleotide)m = (deoxyribonucleotide)n+m + AMP + beta-nicotinamide D-nucleotide.. In terms of biological role, DNA ligase that catalyzes the formation of phosphodiester linkages between 5'-phosphoryl and 3'-hydroxyl groups in double-stranded DNA using NAD as a coenzyme and as the energy source for the reaction. It is essential for DNA replication and repair of damaged DNA. In Endomicrobium trichonymphae, this protein is DNA ligase.